The primary structure comprises 327 residues: Gibberellin 2-beta-dioxygenase 1 (327 aa).

The region spanning 171–276 (QSDCLFRVNH…RLSMIYFCGP (106 aa)) is the Fe2OG dioxygenase domain. Residues histidine 200, aspartate 202, and histidine 257 each coordinate Fe cation. Arginine 267 is a catalytic residue.

It belongs to the iron/ascorbate-dependent oxidoreductase family. GA2OX subfamily. Requires Fe cation as cofactor. Predominantly expressed in roots, flowers, young fruits and seeds.

The catalysed reaction is gibberellin A1 + 2-oxoglutarate + O2 = gibberellin A8 + succinate + CO2. It functions in the pathway plant hormone biosynthesis; gibberellin biosynthesis. In terms of biological role, catalyzes the 2-beta-hydroxylation of several biologically active gibberellins, leading to the homeostatic regulation of their endogenous level. Catabolism of gibberellins (GAs) plays a central role in plant development. Converts GA9/GA20 to GA51/GA29 and GA4/GA1 to GA34/GA8. The chain is Gibberellin 2-beta-dioxygenase 1 (GA2OX1) from Pisum sativum (Garden pea).